Here is a 306-residue protein sequence, read N- to C-terminus: Protein YIPF1 (306 aa).

The Cytoplasmic portion of the chain corresponds to 1–119; it reads MAAVDDLQFE…VRLYIRSNPD (119 aa). The disordered stretch occupies residues 30–63; sequence IEDPSVSFGHQPRPPGSVGREEDEELLGNNDSDE. Over residues 50 to 63 the composition is skewed to acidic residues; the sequence is EEDEELLGNNDSDE. The helical transmembrane segment at 120–140 threads the bilayer; that stretch reads LYGPFWICATLVFAIAISGNL. Over 141-162 the chain is Lumenal; it reads SNFLIHLGEKTYHYVPEFQKVS. Residues 163–183 form a helical membrane-spanning segment; that stretch reads IAATVIYAYAWLVPLALWGFL. Topologically, residues 184-200 are cytoplasmic; it reads LWRNSKVMSMVSYSFLE. The helical transmembrane segment at 201 to 221 threads the bilayer; that stretch reads IVCVYGYSLFIYIPTAVLWII. Residues 222-227 lie on the Lumenal side of the membrane; it reads PQRVVR. The chain crosses the membrane as a helical span at residues 228-248; that stretch reads WVLVMIALGVSGSVLVMTFWP. The Cytoplasmic segment spans residues 249 to 256; that stretch reads AVREDNRR. Residues 257–277 form a helical membrane-spanning segment; sequence VALATIVTIVLLHVLLSVGCL. At 278–306 the chain is on the lumenal side; it reads AYFFDAPEMDHLPAAITTPNQTVTAAKSS. Asparagine 297 is a glycosylation site (N-linked (GlcNAc...) asparagine).

This sequence belongs to the YIP1 family. Interacts with YIPF6; this interaction may stabilize YIPF1. May also form a ternary complex with YIPF2 and YIPF6.

The protein localises to the golgi apparatus. Its subcellular location is the cis-Golgi network membrane. It localises to the trans-Golgi network membrane. It is found in the late endosome membrane. The protein is Protein YIPF1 (Yipf1) of Mus musculus (Mouse).